Reading from the N-terminus, the 175-residue chain is Interferon a3 (175 aa).

Positions 1–23 (MYTMQSWSCIFLIICSMQSVCHC) are cleaved as a signal peptide. An intrachain disulfide couples C24 to C120.

It belongs to the alpha/beta interferon family. Isoform 1 and isoform 2 are expressed in several tissues, including gill, spleen, intestine, kidney and skin.

It localises to the secreted. The protein localises to the cytoplasm. Its subcellular location is the cytosol. Its function is as follows. Key player in antiviral response. Induces expression of TLRs, including that of TLR3, TLR9 and TLR8a1, and that of cytosolic pattern recognition receptors, including RIGI, IFIH1/MDA5 and DHX58/LGP2. Also induces MX1 and its own expression. In the presence of intracellular IFNAR2 (iIFNAR2) and IFNAR1B, intracellular isoform 3 may mediate STAT1 and STAT2 phosphorylation and induction of EIF2AK2, MX1 and RSAD2. The protein is Interferon a3 of Oncorhynchus mykiss (Rainbow trout).